The primary structure comprises 115 residues: Large ribosomal subunit protein bL20 (115 aa).

This sequence belongs to the bacterial ribosomal protein bL20 family.

Its function is as follows. Binds directly to 23S ribosomal RNA and is necessary for the in vitro assembly process of the 50S ribosomal subunit. It is not involved in the protein synthesizing functions of that subunit. The protein is Large ribosomal subunit protein bL20 of Prochlorococcus marinus (strain SARG / CCMP1375 / SS120).